The sequence spans 54 residues: U-reduvitoxin-Pr1a (54 aa).

Positions Met-1 to Ala-19 are cleaved as a signal peptide. 3 cysteine pairs are disulfide-bonded: Cys-24–Cys-39, Cys-31–Cys-44, and Cys-38–Cys-51.

This sequence belongs to the venom Ptu1-like knottin family. Expressed by the venom gland (posterior main gland) (at protein level).

It is found in the secreted. Its function is as follows. Binds reversibly and blocks P/Q-type voltage-gated calcium channels (Cav). This chain is U-reduvitoxin-Pr1a, found in Platymeris rhadamanthus (Red spot assassin bug).